Here is a 122-residue protein sequence, read N- to C-terminus: Hydrogenase maturation factor HypA (122 aa).

H2 lines the Ni(2+) pocket. C73, C75, C95, and C98 together coordinate Zn(2+).

This sequence belongs to the HypA/HybF family.

Functionally, involved in the maturation of [NiFe] hydrogenases. Required for nickel insertion into the metal center of the hydrogenase. This is Hydrogenase maturation factor HypA from Methanothermobacter thermautotrophicus (strain ATCC 29096 / DSM 1053 / JCM 10044 / NBRC 100330 / Delta H) (Methanobacterium thermoautotrophicum).